Consider the following 485-residue polypeptide: Protein nucleotidyltransferase YdiU (485 aa).

ATP contacts are provided by Gly100, Gly102, Arg103, Lys123, Asp135, Gly136, Arg189, and Arg196. Asp265 serves as the catalytic Proton acceptor. Mg(2+)-binding residues include Asn266 and Asp275. Asp275 contributes to the ATP binding site.

The protein belongs to the SELO family. Mg(2+) serves as cofactor. It depends on Mn(2+) as a cofactor.

The catalysed reaction is L-seryl-[protein] + ATP = 3-O-(5'-adenylyl)-L-seryl-[protein] + diphosphate. The enzyme catalyses L-threonyl-[protein] + ATP = 3-O-(5'-adenylyl)-L-threonyl-[protein] + diphosphate. It carries out the reaction L-tyrosyl-[protein] + ATP = O-(5'-adenylyl)-L-tyrosyl-[protein] + diphosphate. It catalyses the reaction L-histidyl-[protein] + UTP = N(tele)-(5'-uridylyl)-L-histidyl-[protein] + diphosphate. The catalysed reaction is L-seryl-[protein] + UTP = O-(5'-uridylyl)-L-seryl-[protein] + diphosphate. The enzyme catalyses L-tyrosyl-[protein] + UTP = O-(5'-uridylyl)-L-tyrosyl-[protein] + diphosphate. Functionally, nucleotidyltransferase involved in the post-translational modification of proteins. It can catalyze the addition of adenosine monophosphate (AMP) or uridine monophosphate (UMP) to a protein, resulting in modifications known as AMPylation and UMPylation. The protein is Protein nucleotidyltransferase YdiU of Trichormus variabilis (strain ATCC 29413 / PCC 7937) (Anabaena variabilis).